We begin with the raw amino-acid sequence, 339 residues long: Phenylalanine--tRNA ligase alpha subunit (339 aa).

Position 254 (Glu-254) interacts with Mg(2+).

The protein belongs to the class-II aminoacyl-tRNA synthetase family. Phe-tRNA synthetase alpha subunit type 1 subfamily. In terms of assembly, tetramer of two alpha and two beta subunits. Mg(2+) is required as a cofactor.

The protein localises to the cytoplasm. The enzyme catalyses tRNA(Phe) + L-phenylalanine + ATP = L-phenylalanyl-tRNA(Phe) + AMP + diphosphate + H(+). This chain is Phenylalanine--tRNA ligase alpha subunit, found in Clostridium botulinum (strain ATCC 19397 / Type A).